A 232-amino-acid chain; its full sequence is Ribonuclease 3 (232 aa).

Residues 6–137 (QEMLKRDFNI…FIGALYLDQG (132 aa)) enclose the RNase III domain. Mg(2+) is bound at residue Glu50. Asp54 is an active-site residue. Residues Asp123 and Glu126 each coordinate Mg(2+). Residue Glu126 is part of the active site. The region spanning 163 to 232 (DNKTELQEVL…AYQALKKLRK (70 aa)) is the DRBM domain.

Belongs to the ribonuclease III family. Homodimer. Requires Mg(2+) as cofactor.

The protein localises to the cytoplasm. It catalyses the reaction Endonucleolytic cleavage to 5'-phosphomonoester.. Digests double-stranded RNA. Involved in the processing of primary rRNA transcript to yield the immediate precursors to the large and small rRNAs (23S and 16S). Processes some mRNAs, and tRNAs when they are encoded in the rRNA operon. Processes pre-crRNA and tracrRNA of type II CRISPR loci if present in the organism. The sequence is that of Ribonuclease 3 from Ligilactobacillus salivarius (strain UCC118) (Lactobacillus salivarius).